The primary structure comprises 266 residues: Aspartate/glutamate leucyltransferase (266 aa).

The protein belongs to the R-transferase family. Bpt subfamily.

The protein resides in the cytoplasm. The catalysed reaction is N-terminal L-glutamyl-[protein] + L-leucyl-tRNA(Leu) = N-terminal L-leucyl-L-glutamyl-[protein] + tRNA(Leu) + H(+). The enzyme catalyses N-terminal L-aspartyl-[protein] + L-leucyl-tRNA(Leu) = N-terminal L-leucyl-L-aspartyl-[protein] + tRNA(Leu) + H(+). In terms of biological role, functions in the N-end rule pathway of protein degradation where it conjugates Leu from its aminoacyl-tRNA to the N-termini of proteins containing an N-terminal aspartate or glutamate. This is Aspartate/glutamate leucyltransferase from Rhizorhabdus wittichii (strain DSM 6014 / CCUG 31198 / JCM 15750 / NBRC 105917 / EY 4224 / RW1) (Sphingomonas wittichii).